The primary structure comprises 188 residues: Xanthine phosphoribosyltransferase (188 aa).

Positions 20 and 27 each coordinate xanthine. Residue 127–131 coordinates 5-phospho-alpha-D-ribose 1-diphosphate; the sequence is ANGNA. Residue K155 participates in xanthine binding.

This sequence belongs to the purine/pyrimidine phosphoribosyltransferase family. Xpt subfamily. Homodimer.

The protein localises to the cytoplasm. It catalyses the reaction XMP + diphosphate = xanthine + 5-phospho-alpha-D-ribose 1-diphosphate. It functions in the pathway purine metabolism; XMP biosynthesis via salvage pathway; XMP from xanthine: step 1/1. Functionally, converts the preformed base xanthine, a product of nucleic acid breakdown, to xanthosine 5'-monophosphate (XMP), so it can be reused for RNA or DNA synthesis. In Phocaeicola vulgatus (strain ATCC 8482 / DSM 1447 / JCM 5826 / CCUG 4940 / NBRC 14291 / NCTC 11154) (Bacteroides vulgatus), this protein is Xanthine phosphoribosyltransferase.